A 387-amino-acid chain; its full sequence is Cyclin-B1-4 (387 aa).

The tract at residues 1 to 29 (MASSRVSDLPHQRGIAGEIKPKNVAGHGR) is disordered.

Belongs to the cyclin family. Cyclin AB subfamily.

This chain is Cyclin-B1-4 (CYCB1-4), found in Arabidopsis thaliana (Mouse-ear cress).